Here is a 482-residue protein sequence, read N- to C-terminus: UDP-glycosyltransferase 1 (482 aa).

N243 is a glycosylation site (N-linked (GlcNAc...) asparagine). Residues 450 to 470 (IYLVYALVLGSAWWIGKTILG) form a helical membrane-spanning segment.

This sequence belongs to the glycosyltransferase 28 family.

The protein resides in the membrane. The enzyme catalyses exophillate aglycone + UDP-alpha-D-glucose = exophillate + UDP + H(+). The protein operates within secondary metabolite biosynthesis. Acts as a depside 2-O-glucosyltransferase that catalyzes the first glycosylation step during phaeomoniecin D biosynthesis by producing the intermediate exophillic acid which is further O-galactosylated into phaeomoniecin D by the C-galactosyltransferase OGT2. This chain is UDP-glycosyltransferase 1, found in Phaeomoniella chlamydospora (Phaeoacremonium chlamydosporum).